The chain runs to 463 residues: ATP-dependent protease ATPase subunit HslU (463 aa).

ATP contacts are provided by residues isoleucine 19, 61–66, aspartate 277, glutamate 341, and arginine 413; that span reads GVGKTE.

The protein belongs to the ClpX chaperone family. HslU subfamily. A double ring-shaped homohexamer of HslV is capped on each side by a ring-shaped HslU homohexamer. The assembly of the HslU/HslV complex is dependent on binding of ATP.

The protein localises to the cytoplasm. Its function is as follows. ATPase subunit of a proteasome-like degradation complex; this subunit has chaperone activity. The binding of ATP and its subsequent hydrolysis by HslU are essential for unfolding of protein substrates subsequently hydrolyzed by HslV. HslU recognizes the N-terminal part of its protein substrates and unfolds these before they are guided to HslV for hydrolysis. The sequence is that of ATP-dependent protease ATPase subunit HslU from Bacillus cereus (strain AH187).